The chain runs to 845 residues: Protein P (845 aa).

The terminal protein domain (TP) stretch occupies residues 1-179; sequence MPLSYQHFRK…FCGSPYSWEQ (179 aa). The tract at residues 180-348 is spacer; sequence ELHHGRLVIK…YCLSHLVNLL (169 aa). Positions 349-692 are polymerase/reverse transcriptase domain (RT); the sequence is EDWGPCTEHG…YMNLYPVARQ (344 aa). A Reverse transcriptase domain is found at 359 to 602; the sequence is EHHIRIPRTP…YSLNFMGYVI (244 aa). Mg(2+) is bound by residues Asp-431, Asp-553, and Asp-554.

It belongs to the hepadnaviridae P protein family.

The enzyme catalyses DNA(n) + a 2'-deoxyribonucleoside 5'-triphosphate = DNA(n+1) + diphosphate. It catalyses the reaction Endonucleolytic cleavage to 5'-phosphomonoester.. With respect to regulation, activated by host HSP70 and HSP40 in vitro to be able to bind the epsilon loop of the pgRNA. Because deletion of the RNase H region renders the protein partly chaperone-independent, the chaperones may be needed indirectly to relieve occlusion of the RNA-binding site by this domain. Inhibited by several reverse-transcriptase inhibitors: Lamivudine, Adefovir and Entecavir. In terms of biological role, multifunctional enzyme that converts the viral RNA genome into dsDNA in viral cytoplasmic capsids. This enzyme displays a DNA polymerase activity that can copy either DNA or RNA templates, and a ribonuclease H (RNase H) activity that cleaves the RNA strand of RNA-DNA heteroduplexes in a partially processive 3'- to 5'-endonucleasic mode. Neo-synthesized pregenomic RNA (pgRNA) are encapsidated together with the P protein, and reverse-transcribed inside the nucleocapsid. Initiation of reverse-transcription occurs first by binding the epsilon loop on the pgRNA genome, and is initiated by protein priming, thereby the 5'-end of (-)DNA is covalently linked to P protein. Partial (+)DNA is synthesized from the (-)DNA template and generates the relaxed circular DNA (RC-DNA) genome. After budding and infection, the RC-DNA migrates in the nucleus, and is converted into a plasmid-like covalently closed circular DNA (cccDNA). The activity of P protein does not seem to be necessary for cccDNA generation, and is presumably released from (+)DNA by host nuclear DNA repair machinery. In Homo sapiens (Human), this protein is Protein P.